The following is a 202-amino-acid chain: MATIPIVIETTGRTERAYDIYSRLLRDRIILLGSAVDDYVANLICAQLLFLESEDPEKEIFMYINSPGGVVSAGLAIYDTMQYVMPPVSTLCLGQAASMGALLLCAGATGMRYALPHSRIMIHQPSGGYQGQATDIEIHAKETRRTRETLNEIMAKHTGQSMERIQVDTERDNFMSAEEAVAYGLIDKVLTSRERLEKKDAE.

The active-site Nucleophile is the Ser-98. The active site involves His-123.

It belongs to the peptidase S14 family. Fourteen ClpP subunits assemble into 2 heptameric rings which stack back to back to give a disk-like structure with a central cavity, resembling the structure of eukaryotic proteasomes.

The protein localises to the cytoplasm. It carries out the reaction Hydrolysis of proteins to small peptides in the presence of ATP and magnesium. alpha-casein is the usual test substrate. In the absence of ATP, only oligopeptides shorter than five residues are hydrolyzed (such as succinyl-Leu-Tyr-|-NHMec, and Leu-Tyr-Leu-|-Tyr-Trp, in which cleavage of the -Tyr-|-Leu- and -Tyr-|-Trp bonds also occurs).. Cleaves peptides in various proteins in a process that requires ATP hydrolysis. Has a chymotrypsin-like activity. Plays a major role in the degradation of misfolded proteins. In Solidesulfovibrio magneticus (strain ATCC 700980 / DSM 13731 / RS-1) (Desulfovibrio magneticus), this protein is ATP-dependent Clp protease proteolytic subunit.